Consider the following 534-residue polypeptide: MENKRAIIAVVLSFIVLVGWGYLSEYMGWTPKSVPATEQKTAASAPAPSVVTSAPEAVTPAPAFSPSTGHEVTVTTPLYKAVLHSGGGVLRQFMLSRYHMGIDRDAAPVNLIESSAIRVAPLGLLVNGQPSWNTGQWAFEGGDLNLADGQTGTLRFVGSVDGLRVVRELEFHADSYLVTEKLHLAPEGDAPRTARVGFTLGTTSLTPGESQYNLTRVAWFADGSFSEKSSTGDLEKGVLIDGSIDWAGVMSNYFLAAVAPKDTRAVLKGKLEGGVYRVAVERPDQMVNPGNSDVIVCNYWFGPKERDLLNAAPNNLGKAIDLGWFGFIARPLVTLLDFFYKYVGNYGTAIILLTILIKLVFWPLSHKSYKSMEQMKKLQPMLAKVREKHADDREKMNEEMMRLYKTYKVNPAGGCLPMLVQIPVFFGLYQALLNAIELRHAPFIAHVPFTDIVWLADLSAKDPFYVTPLVMGATMFLQQKLTPPAGDPTQAKVMMFMPVVFTFLFLNFPSGLVVYWLCNNVLSIAQQWWILRKA.

The next 5 helical transmembrane spans lie at 7-27 (IIAV…SEYM), 319-339 (AIDL…LDFF), 342-362 (YVGN…LVFW), 413-433 (GGCL…QALL), and 493-513 (VMMF…SGLV).

The protein belongs to the OXA1/ALB3/YidC family. Type 1 subfamily. Interacts with the Sec translocase complex via SecD. Specifically interacts with transmembrane segments of nascent integral membrane proteins during membrane integration.

Its subcellular location is the cell inner membrane. Functionally, required for the insertion and/or proper folding and/or complex formation of integral membrane proteins into the membrane. Involved in integration of membrane proteins that insert both dependently and independently of the Sec translocase complex, as well as at least some lipoproteins. Aids folding of multispanning membrane proteins. This is Membrane protein insertase YidC from Nitratidesulfovibrio vulgaris (strain ATCC 29579 / DSM 644 / CCUG 34227 / NCIMB 8303 / VKM B-1760 / Hildenborough) (Desulfovibrio vulgaris).